Reading from the N-terminus, the 240-residue chain is Expansin-A20 (240 aa).

The first 21 residues, 1-21 (MGNILLQLLAVVALCIAPARS), serve as a signal peptide directing secretion. Positions 41 to 145 (GGACGYGNLY…QQVKCWRYGG (105 aa)) constitute an Expansin-like EG45 domain. 2 N-linked (GlcNAc...) asparagine glycosylation sites follow: Asn107 and Asn207. One can recognise an Expansin-like CBD domain in the interval 155–234 (YFELVLVTNM…GWSFGQTFST (80 aa)).

The protein belongs to the expansin family. Expansin A subfamily.

It is found in the secreted. The protein localises to the cell wall. Its subcellular location is the membrane. Functionally, may cause loosening and extension of plant cell walls by disrupting non-covalent bonding between cellulose microfibrils and matrix glucans. No enzymatic activity has been found. May be required for rapid internodal elongation in deepwater rice during submergence. The protein is Expansin-A20 (EXPA20) of Oryza sativa subsp. japonica (Rice).